The primary structure comprises 491 residues: MASVFSVHPLPSSSFLCPLKTTKSRTKHHQTFYTYQKTILINSLQLTELDPKIPQPVQTFWQWLCKEGVVTTKTPVKPGIVPEGLGLVAKRDIAKGETVLQVPKRFWINPDAVAESEIGNVCSGLKPWISVALFLLREKWRDDSKWKYYMDVLPKSTDSTIYWSEEELSEIQGTQLLSTTMSVKDYVQNEFQKVEEEVILRNKQLFPFPITLDDFFWAFGILRSRAFSRLRNQNLILVPFADLTNHNARVTTEDHAHEVRGPAGLFSWDLLFSLRSPLKLKAGDQLFIQYDLNKSNADMALDYGFIEPSSARDAFTLTLEISESDEFYGDKLDIAETNGIGETAYFDIKIGQSLPPTMIPYLRLVALGGTDAFLLESIFRNSVWGHLGLPVSRANEELICKVVRDACKSALSGYHTTIEEDEKLMEEGNLSTRLQIAVGIRLGEKRVLKQIDDIFRERELELDELEYYGERRLKDLGLVGEQGDIIFWEPK.

One can recognise an SET domain in the interval 67–291 (EGVVTTKTPV…AGDQLFIQYD (225 aa)).

It belongs to the class V-like SAM-binding methyltransferase superfamily. Plant protein-lysine LSMT methyltransferase family.

The protein resides in the plastid. Its subcellular location is the chloroplast. It carries out the reaction L-lysyl-[ribulose-1,5-bisphosphate carboxylase] + 3 S-adenosyl-L-methionine = N(6),N(6),N(6)-trimethyl-L-lysyl-[ribulose-1,5-bisphosphate carboxylase] + 3 S-adenosyl-L-homocysteine + 3 H(+). Methylates 'Lys-14' of the large subunit of RuBisCO. The protein is Ribulose-1,5 bisphosphate carboxylase/oxygenase large subunit N-methyltransferase, chloroplastic (RBCMT) of Nicotiana tabacum (Common tobacco).